A 127-amino-acid chain; its full sequence is uncharacterized protein (127 aa).

This is an uncharacterized protein from Escherichia coli (strain K12).